The chain runs to 151 residues: Small ribosomal subunit protein uS15 (151 aa).

It belongs to the universal ribosomal protein uS15 family.

In Anopheles gambiae (African malaria mosquito), this protein is Small ribosomal subunit protein uS15 (RpS13).